Reading from the N-terminus, the 264-residue chain is Phosphonoacetaldehyde hydrolase (264 aa).

Asp-9 functions as the Nucleophile in the catalytic mechanism. Residues Asp-9 and Ala-11 each contribute to the Mg(2+) site. The active-site Schiff-base intermediate with substrate is Lys-50. Asp-183 contacts Mg(2+).

The protein belongs to the HAD-like hydrolase superfamily. PhnX family. Homodimer. Mg(2+) is required as a cofactor.

The catalysed reaction is phosphonoacetaldehyde + H2O = acetaldehyde + phosphate + H(+). Its function is as follows. Involved in phosphonate degradation. The protein is Phosphonoacetaldehyde hydrolase of Bacillus cytotoxicus (strain DSM 22905 / CIP 110041 / 391-98 / NVH 391-98).